We begin with the raw amino-acid sequence, 144 residues long: Large ribosomal subunit protein uL11 (144 aa).

This sequence belongs to the universal ribosomal protein uL11 family. In terms of assembly, part of the ribosomal stalk of the 50S ribosomal subunit. Interacts with L10 and the large rRNA to form the base of the stalk. L10 forms an elongated spine to which L12 dimers bind in a sequential fashion forming a multimeric L10(L12)X complex. One or more lysine residues are methylated.

Forms part of the ribosomal stalk which helps the ribosome interact with GTP-bound translation factors. This is Large ribosomal subunit protein uL11 from Polaromonas naphthalenivorans (strain CJ2).